Here is a 289-residue protein sequence, read N- to C-terminus: 18S rRNA (guanine-N(7))-methyltransferase RID2 (289 aa).

The tract at residues 215–289 (KNEYDESCSE…FTSRKRRTRF (75 aa)) is disordered. A compositionally biased stretch (acidic residues) spans 219–237 (DESCSEDDNSDDEESEEVG). Residues 243 to 254 (RPRKRQRTNTKV) are compositionally biased toward basic residues. Residues 255 to 264 (KGREWVLRKK) are compositionally biased toward basic and acidic residues. The Nuclear localization signal motif lies at 268–275 (RRKGKNVP).

Belongs to the class I-like SAM-binding methyltransferase superfamily. BUD23/WBSCR22 family. Expressed in seedlings, roots and flowers.

It localises to the nucleus. The protein localises to the nucleoplasm. The protein resides in the cytoplasm. Its subcellular location is the perinuclear region. It is found in the nucleolus. It carries out the reaction guanosine(1575) in yeast 18S rRNA + S-adenosyl-L-methionine = N(7)-methylguanosine(1575) in yeast 18S rRNA + S-adenosyl-L-homocysteine. In terms of biological role, essential protein. S-adenosyl-L-methionine-dependent methyltransferase that specifically methylates the N(7) position of a guanine in 18S rRNA. Requires the methyltransferase adapter protein TRM112 for full rRNA methyltransferase activity. Important for biogenesis end export of the 40S ribosomal subunit independent on its methyltransferase activity. Involved in the pre-rRNA processing steps in the nucleolus leading to small-subunit rRNA production independently of its RNA-modifying catalytic activity. Supports cell proliferation. Required for the initiation of lateral root primordia formation and for the root apical meristem (RAM) organization as well as for leaves development. During callus formation from hypocotyl and root explants, required for the initial stage of reactivation of cell proliferation in the hypocotyl stele. Involved in leaf polarity establishment by functioning cooperatively with AS2 to repress abaxial genes ARF3, ARF4, KAN1, KAN2, YAB1 and YAB5, and the knox homeobox genes KNAT1, KNAT2, KNAT6, and STM to promote adaxial development in leaf primordia at shoot apical meristems at high temperatures. The protein is 18S rRNA (guanine-N(7))-methyltransferase RID2 of Arabidopsis thaliana (Mouse-ear cress).